The following is a 1010-amino-acid chain: ATP-dependent DNA/RNA helicase DHX36 (1010 aa).

Residues 1–54 (MSYDYHQNWGRDGGPRSSGGGYGGSYGGSHGGGHGGNRGSGGGGGGGGGRGGRG) are required for recruitment to cytoplasmic stress granules. Residues 1–63 (MSYDYHQNWG…GRHPGHLKGR (63 aa)) are disordered. A required for the pre-miR-134 transport region spans residues 1 to 107 (MSYDYHQNWG…IVQLLHSVQT (107 aa)). Residues 1–202 (MSYDYHQNWG…KKTDLRYIEM (202 aa)) form a necessary for nuclear and nucleolar caps localizations region. The span at 16–51 (RSSGGGYGGSYGGSHGGGHGGNRGSGGGGGGGGGRG) shows a compositional bias: gly residues. Residues 56-78 (HPGHLKGREIGLWYAKKQGQKNK) are DSM (DHX36-specific motif). The segment at 56–108 (HPGHLKGREIGLWYAKKQGQKNKEAERQERAVVHMDERREEQIVQLLHSVQTK) is required for G4-DNA- and G4-RNA-binding. RecA-like domain regions lie at residues 109–388 (NDKD…MIHI) and 389–630 (PGFT…DYQL). Positions 219–389 (VNMIDNHQVT…FGNCPMIHIP (171 aa)) constitute a Helicase ATP-binding domain. 235–240 (GCGKTT) contributes to the ATP binding site. The necessary for interaction with single-stranded DNA at the 3'-end of the G4-DNA structure stretch occupies residues 267 to 319 (RRISAISVAERVAAERAESCGNGNSTGYQIRLQSRLPRKQGSILYCTTGIILQ). Positions 336-339 (DEIH) match the DEAH box motif. Residues glutamate 337 and histidine 339 each coordinate Mg(2+). The Helicase C-terminal domain maps to 479 to 649 (ALIRYIVLEE…ELCLQIKILR (171 aa)). The tract at residues 500 to 559 (WDNISTLHDLLMSQVMFKSDKFIIIPLHSLMPTVNQTQVFKRTPPGVRKIVIATNIAETS) is necessary for interaction with single-stranded DNA at the 3'-end of the G4-DNA structure. Residues 519 to 530 (DKFIIIPLHSLM) carry the Nuclear localization signal motif. Residues serine 559 and 604-607 (RAGR) each bind ATP. The interval 631-700 (PEILRTPLEE…LGVHLARLPV (70 aa)) is WH domain. Necessary for interaction with single-stranded DNA at the 3'-end of the G4-DNA structure regions lie at residues 640–699 (ELCL…ARLP), 851–862 (NLGKKRKMVKVY), and 872–902 (HPKS…IYLY). An OB-fold-like subdomains region spans residues 843-907 (PKVAKIRLNL…SIYLYDCTEV (65 aa)). Lysine 949 is subject to N6-acetyllysine. The residue at position 965 (serine 965) is a Phosphoserine.

As to quaternary structure, found in a multi-helicase-TICAM1 complex at least composed of DHX36, DDX1, DDX21 and TICAM1; this complex exists in resting cells with or without dsRNA poly(I:C) ligand stimulation. Interacts (via C-terminus) with TICAM1 (via TIR domain). Interacts (via C-terminus) with DDX21; this interaction serves as bridges to TICAM1. Interacts with TERT; this interaction is dependent on the ability of DHX36 to bind to the G-quadruplex RNA (G4-RNA) structure present in the telomerase RNA template component (TERC). Interacts with DKC1; this interaction is dependent on the ability of DHX36 to bind to the G4-RNA structure present in TERC. Interacts with PARN; this interaction stimulates PARN to enhance uPA mRNA decay. Interacts with EXOSC3; this interaction occurs in a RNase-insensitive manner. Interacts with EXOSC10; this interaction occurs in a RNase-insensitive manner. Interacts with ILF3; this interaction occurs in a RNA-dependent manner. Interacts with ELAVL1; this interaction occurs in an RNA-dependent manner. Interacts with DDX5; this interaction occurs in a RNA-dependent manner. Interacts with DDX17; this interaction occurs in a RNA-dependent manner. Interacts with HDAC1; this interaction occurs in a RNA-dependent manner. Interacts with HDAC3; this interaction occurs in a RNA-dependent manner. Interacts with HDAC4. Interacts with AGO1. Interacts with AGO2. Interacts with ERCC6. Requires Mg(2+) as cofactor.

The protein localises to the nucleus. The protein resides in the cytoplasm. Its subcellular location is the cytosol. It localises to the stress granule. It is found in the nucleus speckle. The protein localises to the chromosome. The protein resides in the telomere. Its subcellular location is the mitochondrion. It localises to the perikaryon. It is found in the cell projection. The protein localises to the dendrite. The protein resides in the axon. The catalysed reaction is ATP + H2O = ADP + phosphate + H(+). With respect to regulation, ATPase activity is enhanced in the presence of homomeric poly(U) RNAs, but not by double-stranded DNA (dsDNA), double-stranded RNA (dsRNA) and tRNA. Functionally, multifunctional ATP-dependent helicase that unwinds G-quadruplex (G4) structures. Plays a role in many biological processes such as genomic integrity, gene expression regulations and as a sensor to initiate antiviral responses. G4 structures correspond to helical structures containing guanine tetrads. Binds with high affinity to and unwinds G4 structures that are formed in nucleic acids (G4-DNA and G4-RNA). Plays a role in genomic integrity. Converts the G4-RNA structure present in telomerase RNA template component (TREC) into a double-stranded RNA to promote P1 helix formation that acts as a template boundary ensuring accurate reverse transcription. Plays a role in transcriptional regulation. Resolves G4-DNA structures in promoters of genes, such as YY1, KIT/c-kit and ALPL and positively regulates their expression. Plays a role in post-transcriptional regulation. Unwinds a G4-RNA structure located in the 3'-UTR polyadenylation site of the pre-mRNA TP53 and stimulates TP53 pre-mRNA 3'-end processing in response to ultraviolet (UV)-induced DNA damage. Binds to the precursor-microRNA-134 (pre-miR-134) terminal loop and regulates its transport into the synapto-dendritic compartment. Involved in the pre-miR-134-dependent inhibition of target gene expression and the control of dendritic spine size. Plays a role in the regulation of cytoplasmic mRNA translation and mRNA stability. Binds to both G4-RNA structures and alternative non-quadruplex-forming sequence within the 3'-UTR of the PITX1 mRNA regulating negatively PITX1 protein expression. Binds to both G4-RNA structure in the 5'-UTR and AU-rich elements (AREs) localized in the 3'-UTR of NKX2-5 mRNA to either stimulate protein translation or induce mRNA decay in an ELAVL1-dependent manner, respectively. Also binds to ARE sequences present in several mRNAs mediating exosome-mediated 3'-5' mRNA degradation. Involved in cytoplasmic urokinase-type plasminogen activator (uPA) mRNA decay. Component of a multi-helicase-TICAM1 complex that acts as a cytoplasmic sensor of viral double-stranded RNA (dsRNA) and plays a role in the activation of a cascade of antiviral responses including the induction of pro-inflammatory cytokines via the adapter molecule TICAM1. Required for the early embryonic development and hematopoiesis. Involved in the regulation of cardioblast differentiation and proliferation during heart development. Involved in spermatogonia differentiation. May play a role in ossification. This is ATP-dependent DNA/RNA helicase DHX36 from Bos taurus (Bovine).